The chain runs to 92 residues: Small ribosomal subunit protein uS19 (92 aa).

It belongs to the universal ribosomal protein uS19 family.

Functionally, protein S19 forms a complex with S13 that binds strongly to the 16S ribosomal RNA. The protein is Small ribosomal subunit protein uS19 of Corynebacterium diphtheriae (strain ATCC 700971 / NCTC 13129 / Biotype gravis).